We begin with the raw amino-acid sequence, 343 residues long: tRNA-specific 2-thiouridylase MnmA 2 (343 aa).

ATP-binding positions include 7-14 (GMSGGVDS) and Leu-33. The active-site Nucleophile is Cys-91. A disulfide bridge links Cys-91 with Cys-189. Position 115 (Gly-115) interacts with ATP. The interaction with tRNA stretch occupies residues 139–141 (KDQ). Cys-189 (cysteine persulfide intermediate) is an active-site residue.

The protein belongs to the MnmA/TRMU family.

It localises to the cytoplasm. It catalyses the reaction S-sulfanyl-L-cysteinyl-[protein] + uridine(34) in tRNA + AH2 + ATP = 2-thiouridine(34) in tRNA + L-cysteinyl-[protein] + A + AMP + diphosphate + H(+). Catalyzes the 2-thiolation of uridine at the wobble position (U34) of tRNA, leading to the formation of s(2)U34. This is tRNA-specific 2-thiouridylase MnmA 2 from Fusobacterium nucleatum subsp. nucleatum (strain ATCC 25586 / DSM 15643 / BCRC 10681 / CIP 101130 / JCM 8532 / KCTC 2640 / LMG 13131 / VPI 4355).